Here is a 62-residue protein sequence, read N- to C-terminus: Large ribosomal subunit protein uL29 (62 aa).

This sequence belongs to the universal ribosomal protein uL29 family.

This is Large ribosomal subunit protein uL29 from Cytophaga hutchinsonii (strain ATCC 33406 / DSM 1761 / CIP 103989 / NBRC 15051 / NCIMB 9469 / D465).